We begin with the raw amino-acid sequence, 1147 residues long: PDZ domain-containing protein 8 (1147 aa).

The chain crosses the membrane as a helical span at residues 2–24 (GLLLLILASAVLGSFLTLLAQFL). In terms of domain architecture, SMP-LTD spans 87–293 (APPTLETCYF…LPSYKIRFKP (207 aa)). A PDZ domain is found at 365–448 (TVELIKGNLQ…RVLVYYQRPA (84 aa)). Phosphoserine is present on residues serine 490, serine 515, and serine 532. The segment at 504-673 (ELKEETQPLS…DSSDDPQMWE (170 aa)) is disordered. Positions 510–524 (QPLSHSPKRTPTTLS) are enriched in polar residues. Residues 557–576 (KPSTLKTSETTEAAQVSKPQ) are compositionally biased toward polar residues. Residues 580–596 (FKPPVPPRPQGRVPLPP) are compositionally biased toward pro residues. Residues 833 to 884 (KHSFQDTQFQNPTWCDYCKKKVWTKAASQCMFCAYVCHKKCQEKCLAETPLC) form a Phorbol-ester/DAG-type zinc finger. Positions 948–990 (RLSEPGTDLVEPSPKHTPNTSDNEGSDTEVCGSNSPSKRGNSA) are disordered. A phosphoserine mark is found at serine 960 and serine 973. Positions 978-987 (CGSNSPSKRG) are enriched in polar residues. Residues 1021 to 1056 (PTEERIQKLEFMLDKLQNEIDQELEHNNSLVREEKE) are a coiled coil. Residues 1126-1137 (QLIDSQPFSNIS) are compositionally biased toward polar residues. The segment at 1126–1147 (QLIDSQPFSNISDDLFGPSESV) is disordered.

In terms of assembly, interacts with MSN.

It localises to the endoplasmic reticulum membrane. Its function is as follows. Molecular tethering protein that connects endoplasmic reticulum and mitochondria membranes. PDZD8-dependent endoplasmic reticulum-mitochondria membrane tethering is essential for endoplasmic reticulum-mitochondria Ca(2+) transfer. In neurons, involved in the regulation of dendritic Ca(2+) dynamics by regulating mitochondrial Ca(2+) uptake in neurons. The protein is PDZ domain-containing protein 8 of Mus musculus (Mouse).